Consider the following 485-residue polypeptide: MSGGLFIDGKWRAGQGAGLSSTDPATGEDVWSAATATPADVADAVAAARKAFPAWADRPREERIAILRRYKDILVERAAPYAEALSRETGKALWETRAELASMAGKVDLSIRAYDERTGVTENAMPFGRAVLRHRAHGVMAVLGPFNFPGHLPNGHIVPALLAGDTVVFKPSEETPLAGQLMVEALEAAGAPAGVVNLVQGGRETGQALIAQDIDGLLFTGSAAAGTYFRRYFADRPDVILALELGGNNPLVVWNADDAPEAVAALIVQSAFITTGQRCSCARRLIVPDDASGAAIIEATVALAERLVIGAWNAENEPFMGPLISGRAAKAAREVASATPGKTILALDGVAGLGDAFLKPGIVDVTGLETPDEELFAPLLQVRRVSSFDEALAAANATRYGLSAGLISNESELWDKFLSRIRAGVVNWNRPTTGAAGSMPFGGLGASGNHRPSAYYAADYCAYPVASFEASMVVDTLKDIKGLKA.

An NAD(+)-binding site is contributed by 221 to 226 (GSAAAG). Catalysis depends on residues Glu244 and Cys279.

It belongs to the aldehyde dehydrogenase family. AstD subfamily.

It carries out the reaction N-succinyl-L-glutamate 5-semialdehyde + NAD(+) + H2O = N-succinyl-L-glutamate + NADH + 2 H(+). Its pathway is amino-acid degradation; L-arginine degradation via AST pathway; L-glutamate and succinate from L-arginine: step 4/5. Its function is as follows. Catalyzes the NAD-dependent reduction of succinylglutamate semialdehyde into succinylglutamate. This Caulobacter vibrioides (strain ATCC 19089 / CIP 103742 / CB 15) (Caulobacter crescentus) protein is N-succinylglutamate 5-semialdehyde dehydrogenase 2.